Here is a 263-residue protein sequence, read N- to C-terminus: Proteasome subunit beta type-5 (263 aa).

The propeptide at 1–59 is removed in mature form; the sequence is MALASVLERPLSVNRRGFFGLGGRADLLDLGPGSPSDGLSLAAPSWGVPEEPRIEILHG. The active-site Nucleophile is T60. A108 is a bortezomib binding site.

This sequence belongs to the peptidase T1B family. As to quaternary structure, the 26S proteasome consists of a 20S proteasome core and two 19S regulatory subunits. The 20S proteasome core is a barrel-shaped complex made of 28 subunits that are arranged in four stacked rings. The two outer rings are each formed by seven alpha subunits, and the two inner rings are formed by seven beta subunits. The proteolytic activity is exerted by three beta-subunits PSMB5, PSMB6 and PSMB7. Directly interacts with POMP. Interacts with ABCB1 and TAP1.

It localises to the cytoplasm. It is found in the nucleus. The catalysed reaction is Cleavage of peptide bonds with very broad specificity.. Its function is as follows. Component of the 20S core proteasome complex involved in the proteolytic degradation of most intracellular proteins. This complex plays numerous essential roles within the cell by associating with different regulatory particles. Associated with two 19S regulatory particles, forms the 26S proteasome and thus participates in the ATP-dependent degradation of ubiquitinated proteins. The 26S proteasome plays a key role in the maintenance of protein homeostasis by removing misfolded or damaged proteins that could impair cellular functions, and by removing proteins whose functions are no longer required. Associated with the PA200 or PA28, the 20S proteasome mediates ubiquitin-independent protein degradation. This type of proteolysis is required in several pathways including spermatogenesis (20S-PA200 complex) or generation of a subset of MHC class I-presented antigenic peptides (20S-PA28 complex). Within the 20S core complex, PSMB5 displays a chymotrypsin-like activity. This Bos taurus (Bovine) protein is Proteasome subunit beta type-5.